The chain runs to 114 residues: Nucleoid-associated protein CKL_3826 (114 aa).

It belongs to the YbaB/EbfC family. As to quaternary structure, homodimer.

Its subcellular location is the cytoplasm. The protein localises to the nucleoid. Functionally, binds to DNA and alters its conformation. May be involved in regulation of gene expression, nucleoid organization and DNA protection. This chain is Nucleoid-associated protein CKL_3826, found in Clostridium kluyveri (strain ATCC 8527 / DSM 555 / NBRC 12016 / NCIMB 10680 / K1).